Consider the following 207-residue polypeptide: Octanoyltransferase (207 aa).

The 176-residue stretch at 27 to 202 (GETPDELWIV…HLETRLARPQ (176 aa)) folds into the BPL/LPL catalytic domain. Residues 66-73 (RGGQITYH), 133-135 (SLG), and 146-148 (GLS) contribute to the substrate site. Catalysis depends on C164, which acts as the Acyl-thioester intermediate.

This sequence belongs to the LipB family.

The protein localises to the cytoplasm. It carries out the reaction octanoyl-[ACP] + L-lysyl-[protein] = N(6)-octanoyl-L-lysyl-[protein] + holo-[ACP] + H(+). It functions in the pathway protein modification; protein lipoylation via endogenous pathway; protein N(6)-(lipoyl)lysine from octanoyl-[acyl-carrier-protein]: step 1/2. In terms of biological role, catalyzes the transfer of endogenously produced octanoic acid from octanoyl-acyl-carrier-protein onto the lipoyl domains of lipoate-dependent enzymes. Lipoyl-ACP can also act as a substrate although octanoyl-ACP is likely to be the physiological substrate. The chain is Octanoyltransferase from Laribacter hongkongensis (strain HLHK9).